A 182-amino-acid chain; its full sequence is Adenine phosphoribosyltransferase (182 aa).

Belongs to the purine/pyrimidine phosphoribosyltransferase family. Homodimer.

The protein resides in the cytoplasm. It carries out the reaction AMP + diphosphate = 5-phospho-alpha-D-ribose 1-diphosphate + adenine. Its pathway is purine metabolism; AMP biosynthesis via salvage pathway; AMP from adenine: step 1/1. In terms of biological role, catalyzes a salvage reaction resulting in the formation of AMP, that is energically less costly than de novo synthesis. In Streptomyces coelicolor (strain ATCC BAA-471 / A3(2) / M145), this protein is Adenine phosphoribosyltransferase.